We begin with the raw amino-acid sequence, 935 residues long: Protein translocase subunit SecA (935 aa).

Residues Gln-90, 108 to 112 (GEGKT), and Asp-504 contribute to the ATP site. A disordered region spans residues 543-568 (GGRRPQGFGTSKKKGKNWSPSDADIF).

This sequence belongs to the SecA family. Monomer and homodimer. Part of the essential Sec protein translocation apparatus which comprises SecA, SecYEG and auxiliary proteins SecDF. Other proteins may also be involved.

It localises to the cell inner membrane. The protein resides in the cellular thylakoid membrane. Its subcellular location is the cytoplasm. The enzyme catalyses ATP + H2O + cellular proteinSide 1 = ADP + phosphate + cellular proteinSide 2.. Functionally, part of the Sec protein translocase complex. Interacts with the SecYEG preprotein conducting channel. Has a central role in coupling the hydrolysis of ATP to the transfer of proteins into and across the cell membrane, serving as an ATP-driven molecular motor driving the stepwise translocation of polypeptide chains across the membrane. In terms of biological role, probably participates in protein translocation into and across both the cytoplasmic and thylakoid membranes in cyanobacterial cells. This is Protein translocase subunit SecA from Rippkaea orientalis (strain PCC 8801 / RF-1) (Cyanothece sp. (strain PCC 8801)).